Reading from the N-terminus, the 975-residue chain is Translation initiation factor IF-2 (975 aa).

Positions 48 to 63 (DHLRKSHGATDGDKRK) are enriched in basic and acidic residues. Disordered regions lie at residues 48–84 (DHLR…GKAR) and 96–388 (FVKR…QAPT). Positions 104 to 115 (ETGADQAQAQTD) are enriched in low complexity. Over residues 120–177 (AELKRREEEARREAELLEKQAQELRERQERLEREEAERRAREEAAEAERRRAEEEAAA) the composition is skewed to basic and acidic residues. Positions 178 to 211 (KRAAAAQAEAAQQAAAAREQAQRAQSEPAEQSAQ) are enriched in low complexity. A compositionally biased stretch (basic and acidic residues) spans 212–263 (DEARAAAERAAQREAAKKAEDAAREAADKARAEQEEIRKRREAAEAEARAIR). Residues 302–330 (KPAGEAAAARPAAKKPASGAPAPAAAPAG) show a composition bias toward low complexity. Gly residues predominate over residues 359–372 (SSGGVDRGWRGGPK). Residues 475–644 (PRPPVVTVMG…LLQAEVLELK (170 aa)) form the tr-type G domain. Residues 484–491 (GHVDHGKT) are G1. Residue 484 to 491 (GHVDHGKT) participates in GTP binding. Residues 509–513 (GITQH) form a G2 region. The segment at 530–533 (DTPG) is G3. GTP contacts are provided by residues 530 to 534 (DTPGH) and 584 to 587 (NKID). Residues 584–587 (NKID) are G4. The tract at residues 620–622 (SAK) is G5.

It belongs to the TRAFAC class translation factor GTPase superfamily. Classic translation factor GTPase family. IF-2 subfamily.

Its subcellular location is the cytoplasm. Functionally, one of the essential components for the initiation of protein synthesis. Protects formylmethionyl-tRNA from spontaneous hydrolysis and promotes its binding to the 30S ribosomal subunits. Also involved in the hydrolysis of GTP during the formation of the 70S ribosomal complex. The polypeptide is Translation initiation factor IF-2 (Burkholderia pseudomallei (strain 1710b)).